The sequence spans 379 residues: L-lactate dehydrogenase (379 aa).

The FMN hydroxy acid dehydrogenase domain occupies 1–379 (MIISSSTDYR…ITSELLVREP (379 aa)). Position 24 (Y24) interacts with substrate. Positions 106 and 127 each coordinate FMN. Substrate is bound at residue Y129. FMN is bound at residue T155. R164 serves as a coordination point for substrate. An FMN-binding site is contributed by K251. The active-site Proton acceptor is the H275. R278 contacts substrate. 306-330 (DSGIRSGLDVVRMIALGADAAMLGR) is an FMN binding site.

Belongs to the FMN-dependent alpha-hydroxy acid dehydrogenase family. FMN is required as a cofactor.

The protein localises to the cell membrane. It catalyses the reaction (S)-lactate + A = pyruvate + AH2. Its function is as follows. Catalyzes the conversion of L-lactate to pyruvate. Is coupled to the respiratory chain. This chain is L-lactate dehydrogenase, found in Alcaligenes faecalis.